A 1322-amino-acid polypeptide reads, in one-letter code: Myosin-1 (1322 aa).

The region spanning 42 to 728 is the Myosin motor domain; it reads AGVSDMTLLT…TLFALETMRD (687 aa). 135–142 lines the ATP pocket; the sequence is GESGAGKT. S369 is subject to Phosphoserine. The segment at 417 to 499 is actin-binding; it reads VIGVLDIYGF…PGIFSALNDA (83 aa). 2 IQ domains span residues 732–752 and 753–778; these read HNMA…REES and ARRI…YGHQ. In terms of domain architecture, TH1 spans 786 to 980; sequence RRRFSLISMR…SGEPPTSVSR (195 aa). Disordered regions lie at residues 966–1090 and 1137–1162; these read IVSV…MPSY and VQQL…ATPA. Composition is skewed to low complexity over residues 1000–1017 and 1027–1056; these read SRPV…PTTT and GGTA…ASGA. 2 stretches are compositionally biased toward polar residues: residues 1078–1087 and 1137–1148; these read PATSAPSSGM and VQQLGSSSTAQT. Residues 1184–1243 form the SH3 domain; it reads RRLPRYRALYDFETQEAGELPLRTGDIVELEEKEENGWWLVKKGSTEGWSPADYLELIAE. Positions 1246–1300 are disordered; the sequence is AAKPRPPPPAKPASAKPAAAPARVSQSSVTSSWTPPDSHAAPVAVMPGMGDPGGF. Residues 1257 to 1267 show a composition bias toward low complexity; it reads PASAKPAAAPA. The span at 1269–1280 shows a compositional bias: polar residues; the sequence is VSQSSVTSSWTP.

The protein belongs to the TRAFAC class myosin-kinesin ATPase superfamily. Myosin family. In terms of processing, phosphorylation of the TEDS site (Ser-369) is required for the polarization of the actin cytoskeleton. Phosphorylation probably activates the myosin-I ATPase activity.

The protein localises to the cytoplasm. It is found in the cytoskeleton. Its subcellular location is the actin patch. In terms of biological role, type-I myosin implicated in the organization of the actin cytoskeleton. Required for proper actin cytoskeleton polarization. At the cell cortex, assembles in patch-like structures together with proteins from the actin-polymerizing machinery and promotes actin assembly. Functions as actin nucleation-promoting factor (NPF) for the Arp2/3 complex. This is Myosin-1 (MYO1) from Malassezia globosa (strain ATCC MYA-4612 / CBS 7966) (Dandruff-associated fungus).